A 76-amino-acid chain; its full sequence is uncharacterized protein (76 aa).

The disordered stretch occupies residues M1 to D28. Positions L16–K26 are enriched in polar residues.

The protein resides in the cytoplasm. Its subcellular location is the bud. It localises to the bud neck. This is an uncharacterized protein from Saccharomyces cerevisiae (strain ATCC 204508 / S288c) (Baker's yeast).